The sequence spans 204 residues: Ricin B-like lectin R40G3 (204 aa).

The Ricin B-type lectin domain maps to 54–200; that stretch reads TVKVYCRANP…CEGDNQRWKI (147 aa).

As to expression, expressed in shoots and lamina.

Lectin which binds carbohydrates in vitro. Interacts through its lectin domain with glycan structures containing specific motifs. The chain is Ricin B-like lectin R40G3 from Oryza sativa subsp. japonica (Rice).